A 31-amino-acid polypeptide reads, in one-letter code: Photosystem II reaction center protein T (31 aa).

The helical transmembrane segment at 3–23 (ALVYTFLLIGTLGVIFFAIFF) threads the bilayer.

The protein belongs to the PsbT family. As to quaternary structure, PSII is composed of 1 copy each of membrane proteins PsbA, PsbB, PsbC, PsbD, PsbE, PsbF, PsbH, PsbI, PsbJ, PsbK, PsbL, PsbM, PsbT, PsbY, PsbZ, Psb30/Ycf12, at least 3 peripheral proteins of the oxygen-evolving complex and a large number of cofactors. It forms dimeric complexes.

The protein localises to the plastid. Its subcellular location is the chloroplast thylakoid membrane. Its function is as follows. Found at the monomer-monomer interface of the photosystem II (PS II) dimer, plays a role in assembly and dimerization of PSII. PSII is a light-driven water plastoquinone oxidoreductase, using light energy to abstract electrons from H(2)O, generating a proton gradient subsequently used for ATP formation. The polypeptide is Photosystem II reaction center protein T (Euglena gracilis).